Reading from the N-terminus, the 347-residue chain is Membrane progestin receptor gamma-B (347 aa).

Residues 1-52 (MLSLIKLQRVFNVHQVPKAFHEDGIISGYRHPRSSATECVWSLFQLTNETLN) are Cytoplasmic-facing. A helical transmembrane segment spans residues 53–73 (VWTHFLPTWYFLWKLMTVLLM). Over 74 to 81 (EDVWNEAY) the chain is Extracellular. The chain crosses the membrane as a helical span at residues 82 to 102 (TWPLLVFLFSCCVYPLASSCA). Topologically, residues 103-114 (HTFSSMSTRARH) are cytoplasmic. Residues 115–135 (ICYFFDYGALSFYSLGSAISY) form a helical membrane-spanning segment. Topologically, residues 136–138 (SAY) are extracellular. Residues 139–159 (VFPDAWLSSSFHAYYISVAVF) form a helical membrane-spanning segment. Topologically, residues 160 to 201 (NTVLSTSLACYSRLGLPLLHYSHDIVERFSERQCPRMSKVLR) are cytoplasmic. A helical membrane pass occupies residues 202–222 (ILAFAYPYLFDNIPLFYRLFV). At 223 to 235 (CVGEGCTDNEANS) the chain is on the extracellular side. The helical transmembrane segment at 236-256 (VHVQHTLLAFLTSFLFATHLP) threads the bilayer. Residues 257 to 314 (ERLAPGRFDYIGHSHQLFHVCAIIGTHFQMKAIEMDMGLRRSQLLASAPAISFNNTIG) are Cytoplasmic-facing. The chain crosses the membrane as a helical span at residues 315–335 (AALLCVSVSLGIICVYSLPLL). Residues 336–347 (YSSNPKNTANKE) lie on the Extracellular side of the membrane.

It belongs to the ADIPOR family.

Its subcellular location is the membrane. Steroid membrane receptor. Binds progesterone. May be involved in oocyte maturation. This Danio rerio (Zebrafish) protein is Membrane progestin receptor gamma-B.